A 346-amino-acid polypeptide reads, in one-letter code: 4-hydroxy-2-oxovalerate aldolase (346 aa).

The Pyruvate carboxyltransferase domain occupies 8–260; it reads VTLHDMSLRD…ETGIDLYKIM (253 aa). Substrate is bound at residue 16–17; it reads RD. Asp-17 is a Mn(2+) binding site. The active-site Proton acceptor is His-20. Residues Ser-170 and His-199 each contribute to the substrate site. The Mn(2+) site is built by His-199 and His-201. Residue Tyr-290 participates in substrate binding.

The protein belongs to the 4-hydroxy-2-oxovalerate aldolase family.

The enzyme catalyses (S)-4-hydroxy-2-oxopentanoate = acetaldehyde + pyruvate. This is 4-hydroxy-2-oxovalerate aldolase (nahM) from Stutzerimonas stutzeri (Pseudomonas stutzeri).